A 238-amino-acid polypeptide reads, in one-letter code: Deoxyribose-phosphate aldolase (238 aa).

Residue Asp-104 is the Proton donor/acceptor of the active site. The active-site Schiff-base intermediate with acetaldehyde is Lys-168. Catalysis depends on Lys-197, which acts as the Proton donor/acceptor.

It belongs to the DeoC/FbaB aldolase family. DeoC type 1 subfamily.

The protein localises to the cytoplasm. It catalyses the reaction 2-deoxy-D-ribose 5-phosphate = D-glyceraldehyde 3-phosphate + acetaldehyde. Its pathway is carbohydrate degradation; 2-deoxy-D-ribose 1-phosphate degradation; D-glyceraldehyde 3-phosphate and acetaldehyde from 2-deoxy-alpha-D-ribose 1-phosphate: step 2/2. In terms of biological role, catalyzes a reversible aldol reaction between acetaldehyde and D-glyceraldehyde 3-phosphate to generate 2-deoxy-D-ribose 5-phosphate. The polypeptide is Deoxyribose-phosphate aldolase (Bacteroides thetaiotaomicron (strain ATCC 29148 / DSM 2079 / JCM 5827 / CCUG 10774 / NCTC 10582 / VPI-5482 / E50)).